A 344-amino-acid polypeptide reads, in one-letter code: N-acetyl-gamma-glutamyl-phosphate reductase (344 aa).

The active site involves Cys147.

Belongs to the NAGSA dehydrogenase family. Type 1 subfamily.

It is found in the cytoplasm. The enzyme catalyses N-acetyl-L-glutamate 5-semialdehyde + phosphate + NADP(+) = N-acetyl-L-glutamyl 5-phosphate + NADPH + H(+). The protein operates within amino-acid biosynthesis; L-arginine biosynthesis; N(2)-acetyl-L-ornithine from L-glutamate: step 3/4. Functionally, catalyzes the NADPH-dependent reduction of N-acetyl-5-glutamyl phosphate to yield N-acetyl-L-glutamate 5-semialdehyde. The polypeptide is N-acetyl-gamma-glutamyl-phosphate reductase (Bacillus amyloliquefaciens (Bacillus velezensis)).